The primary structure comprises 433 residues: Glutamate-1-semialdehyde 2,1-aminomutase (433 aa).

Residue K265 is modified to N6-(pyridoxal phosphate)lysine.

It belongs to the class-III pyridoxal-phosphate-dependent aminotransferase family. HemL subfamily. In terms of assembly, homodimer. Requires pyridoxal 5'-phosphate as cofactor.

The protein localises to the cytoplasm. It carries out the reaction (S)-4-amino-5-oxopentanoate = 5-aminolevulinate. Its pathway is porphyrin-containing compound metabolism; protoporphyrin-IX biosynthesis; 5-aminolevulinate from L-glutamyl-tRNA(Glu): step 2/2. This Shewanella denitrificans (strain OS217 / ATCC BAA-1090 / DSM 15013) protein is Glutamate-1-semialdehyde 2,1-aminomutase.